Reading from the N-terminus, the 108-residue chain is MGLSSDSPVRVEWIAAVTFAAGTAALGYLAYKKFYAKESRTKAMVNLQIQKDNPKVVHAFDMEDLGDKAVYCRCWRSKKFPFCDGAHIKHNEETGDNVGPLIIKKKET.

The chain crosses the membrane as a helical; Signal-anchor for type III membrane protein span at residues 13–31; sequence WIAAVTFAAGTAALGYLAY. The Cytoplasmic segment spans residues 32 to 108; it reads KKFYAKESRT…GPLIIKKKET (77 aa). Residue lysine 42 forms a Glycyl lysine isopeptide (Lys-Gly) (interchain with G-Cter in ubiquitin) linkage. Lysine 55 serves as the catalytic Schiff-base intermediate with pyridoxal 5'-phosphate. 2 positions are modified to N6-acetyllysine; alternate: lysine 55 and lysine 68. Glycyl lysine isopeptide (Lys-Gly) (interchain with G-Cter in ubiquitin); alternate cross-links involve residues lysine 55 and lysine 68. 2 residues coordinate [2Fe-2S] cluster: cysteine 72 and cysteine 74. Residues lysine 78 and lysine 79 each participate in a glycyl lysine isopeptide (Lys-Gly) (interchain with G-Cter in ubiquitin) cross-link. 2 residues coordinate [2Fe-2S] cluster: cysteine 83 and histidine 87. A Glycyl lysine isopeptide (Lys-Gly) (interchain with G-Cter in ubiquitin) cross-link involves residue lysine 89. Lysine 104 is subject to N6-acetyllysine; alternate. Lysine 104 participates in a covalent cross-link: Glycyl lysine isopeptide (Lys-Gly) (interchain with G-Cter in ubiquitin); alternate. Residues lysine 105 and lysine 106 each participate in a glycyl lysine isopeptide (Lys-Gly) (interchain with G-Cter in ubiquitin) cross-link.

It belongs to the CISD protein family. As to quaternary structure, homodimer. It depends on [2Fe-2S] cluster as a cofactor. The cofactor is pyridoxal 5'-phosphate. Ubiquitinated by PRKN during mitophagy, leading to its degradation and enhancement of mitophagy. Deubiquitinated by USP30.

It is found in the mitochondrion outer membrane. The enzyme catalyses L-cysteine + 2-oxoglutarate = 2-oxo-3-sulfanylpropanoate + L-glutamate. Its function is as follows. L-cysteine transaminase that catalyzes the reversible transfer of the amino group from L-cysteine to the alpha-keto acid 2-oxoglutarate to respectively form 2-oxo-3-sulfanylpropanoate and L-glutamate. The catalytic cycle occurs in the presence of pyridoxal 5'-phosphate (PLP) cofactor that facilitates transamination by initially forming an internal aldimine with the epsilon-amino group of active site Lys-55 residue on the enzyme (PLP-enzyme aldimine), subsequently displaced by formation of an external aldimine with the substrate amino group (PLP-L-cysteine aldimine). The external aldimine is further deprotonated to form a carbanion intermediate, which in the presence of 2-oxoglutarate regenerates PLP yielding final products 2-oxo-3-sulfanylpropanoate and L-glutamate. The proton transfer in carbanion intermediate is suggested to be controlled by the active site lysine residue, whereas PLP stabilizes carbanion structure through electron delocalization, also known as the electron sink effect. Plays a key role in regulating maximal capacity for electron transport and oxidative phosphorylation. May be involved in iron-sulfur cluster shuttling and/or in redox reactions. Can transfer the [2Fe-2S] cluster to an apo-acceptor protein only when in the oxidation state, likely serving as a redox sensor that regulates mitochondrial iron-sulfur cluster assembly and iron trafficking upon oxidative stress. This is CDGSH iron-sulfur domain-containing protein 1 (Cisd1) from Rattus norvegicus (Rat).